The following is a 404-amino-acid chain: Tryptophan synthase beta chain (404 aa).

Position 98 is an N6-(pyridoxal phosphate)lysine (lysine 98).

The protein belongs to the TrpB family. Tetramer of two alpha and two beta chains. Pyridoxal 5'-phosphate is required as a cofactor.

It carries out the reaction (1S,2R)-1-C-(indol-3-yl)glycerol 3-phosphate + L-serine = D-glyceraldehyde 3-phosphate + L-tryptophan + H2O. It functions in the pathway amino-acid biosynthesis; L-tryptophan biosynthesis; L-tryptophan from chorismate: step 5/5. In terms of biological role, the beta subunit is responsible for the synthesis of L-tryptophan from indole and L-serine. In Acidiphilium cryptum (strain JF-5), this protein is Tryptophan synthase beta chain.